The primary structure comprises 163 residues: Inorganic pyrophosphatase (163 aa).

E9 contributes to the Mg(2+) binding site. Positions 17, 31, and 43 each coordinate substrate. 4 residues coordinate Mg(2+): D53, D58, D85, and D90. D90 functions as the Proton acceptor in the catalytic mechanism. Y127 lines the substrate pocket.

This sequence belongs to the PPase family. In terms of assembly, homohexamer. Requires Mg(2+) as cofactor.

Its subcellular location is the cytoplasm. The enzyme catalyses diphosphate + H2O = 2 phosphate + H(+). Its function is as follows. Catalyzes the hydrolysis of inorganic pyrophosphate (PPi) forming two phosphate ions. In Leifsonia xyli subsp. xyli (strain CTCB07), this protein is Inorganic pyrophosphatase.